A 408-amino-acid chain; its full sequence is 26S proteasome regulatory subunit 6B homolog (408 aa).

Ala-2 is subject to N-acetylalanine. Ser-16 carries the post-translational modification Phosphoserine. Positions 28-75 form a coiled coil; that stretch reads EDLYGRLKSLERQLEFTDIQEEYVKDEQKNLKRELLRAQEEVKRIQSV. 196-203 lines the ATP pocket; that stretch reads GPPGTGKT.

This sequence belongs to the AAA ATPase family. As to quaternary structure, component of the 19S regulatory particle (RP/PA700) base subcomplex of the 26S proteasome. The 26S proteasome is composed of a core protease (CP), known as the 20S proteasome, capped at one or both ends by the 19S regulatory particle (RP/PA700). The RP/PA700 complex is composed of at least 17 different subunits in two subcomplexes, the base and the lid, which form the portions proximal and distal to the 20S proteolytic core, respectively. Expressed in dark-grown etiolated seedlings, roots, leaves, stems and flowers.

The protein localises to the cytoplasm. The protein resides in the nucleus. In terms of biological role, the 26S proteasome is involved in the ATP-dependent degradation of ubiquitinated proteins. The regulatory (or ATPase) complex confers ATP dependency and substrate specificity to the 26S complex. The chain is 26S proteasome regulatory subunit 6B homolog (RPT3) from Arabidopsis thaliana (Mouse-ear cress).